The sequence spans 202 residues: Keratin-associated protein 5-10 (202 aa).

7 repeat units span residues 48–51 (CCKP), 54–57 (CCVP), 144–147 (CCKP), 162–165 (CCNP), 172–175 (CCVP), 182–185 (CCKP), and 192–195 (CCVP). A 7 X 4 AA repeats of C-C-X-P region spans residues 48-195 (CCKPVCCCVP…CCCQSSCCVP (148 aa)).

It belongs to the KRTAP type 5 family. Interacts with hair keratins. Expressed in hair root but not in skin. Expressed also in brain and skeletal muscle.

Its function is as follows. In the hair cortex, hair keratin intermediate filaments are embedded in an interfilamentous matrix, consisting of hair keratin-associated protein (KRTAP), which are essential for the formation of a rigid and resistant hair shaft through their extensive disulfide bond cross-linking with abundant cysteine residues of hair keratins. The matrix proteins include the high-sulfur and high-glycine-tyrosine keratins. In Homo sapiens (Human), this protein is Keratin-associated protein 5-10 (KRTAP5-10).